A 501-amino-acid chain; its full sequence is Ribose import ATP-binding protein RbsA (501 aa).

2 consecutive ABC transporter domains span residues 5–241 (LQLK…VGRK) and 252–495 (APGD…VGKL). 37 to 44 (GENGAGKS) provides a ligand contact to ATP.

It belongs to the ABC transporter superfamily. Ribose importer (TC 3.A.1.2.1) family. The complex is composed of an ATP-binding protein (RbsA), two transmembrane proteins (RbsC) and a solute-binding protein (RbsB).

The protein localises to the cell inner membrane. It carries out the reaction D-ribose(out) + ATP + H2O = D-ribose(in) + ADP + phosphate + H(+). Part of the ABC transporter complex RbsABC involved in ribose import. Responsible for energy coupling to the transport system. This is Ribose import ATP-binding protein RbsA from Escherichia coli (strain UTI89 / UPEC).